The chain runs to 333 residues: MATLKEKLITHIASESTIPNNKVTVVGVGQVGMACAVSILGKSLCDELALVDVLEDKLKGEMMDLQHGSLFLQTHKIVADKDYAVTANSKIVVVTAGVRQQEGESRLNLVQRNVNVFKFIIPQIIKYSPDCIILVVSNPVDILTYVTWKLSGLPKHRVIGSGCNLDSARFRYLMSEKLGIHPSSCHGWILGEHGDSSVAVWSGVNVAGVSLQELNPAMGTDRDSEKWKEVHKQVVESAYEVIKLKGYTNWAIGFSVADLLETMMKNLNRVQPVSTMVKGMYGIENEVFLSLPCVLSASGLTSVINQKLKDDEVAQLRSSADTLWSIQKDLKDL.

NAD(+) contacts are provided by residues 29-57 and Arg99; that span reads GQVGMACAVSILGKSLCDELALVDVLEDK. Substrate contacts are provided by Arg106, Asn138, and Arg169. Residue Asn138 participates in NAD(+) binding. The Proton acceptor role is filled by His193. Residue Thr248 participates in substrate binding.

The protein belongs to the LDH/MDH superfamily. LDH family. As to quaternary structure, homotetramer.

It is found in the cytoplasm. It carries out the reaction (S)-lactate + NAD(+) = pyruvate + NADH + H(+). Its pathway is fermentation; pyruvate fermentation to lactate; (S)-lactate from pyruvate: step 1/1. In terms of biological role, interconverts simultaneously and stereospecifically pyruvate and lactate with concomitant interconversion of NADH and NAD(+). The sequence is that of L-lactate dehydrogenase B chain (LDHB) from Caiman crocodilus apaporiensis (Rio Apaporis caiman).